The primary structure comprises 67 residues: Ferredoxin (67 aa).

4Fe-4S ferredoxin-type domains lie at 3–31 and 36–67; these read WKVSVDQDTCIGDAICASLCPDVFEMNDE and PKVEIIEDEELYNCAKEAMESCPVSAITIEEA. [4Fe-4S] cluster contacts are provided by cysteine 12, aspartate 15, and cysteine 18. A disulfide bridge connects residues cysteine 22 and cysteine 49. [4Fe-4S] cluster is bound at residue cysteine 57.

Requires [4Fe-4S] cluster as cofactor. The cofactor is [3Fe-4S] cluster.

Functionally, ferredoxins are iron-sulfur proteins that transfer electrons in a wide variety of metabolic reactions. The sequence is that of Ferredoxin (fdxA) from Pyrococcus abyssi (strain GE5 / Orsay).